The chain runs to 316 residues: Transaldolase (316 aa).

Residue K132 is the Schiff-base intermediate with substrate of the active site.

The protein belongs to the transaldolase family. Type 1 subfamily. As to quaternary structure, homodimer.

It is found in the cytoplasm. The catalysed reaction is D-sedoheptulose 7-phosphate + D-glyceraldehyde 3-phosphate = D-erythrose 4-phosphate + beta-D-fructose 6-phosphate. It functions in the pathway carbohydrate degradation; pentose phosphate pathway; D-glyceraldehyde 3-phosphate and beta-D-fructose 6-phosphate from D-ribose 5-phosphate and D-xylulose 5-phosphate (non-oxidative stage): step 2/3. In terms of biological role, transaldolase is important for the balance of metabolites in the pentose-phosphate pathway. The sequence is that of Transaldolase from Aliivibrio fischeri (strain ATCC 700601 / ES114) (Vibrio fischeri).